Consider the following 197-residue polypeptide: Large ribosomal subunit protein bL17 (197 aa).

A disordered region spans residues 120–197 (DVPPADTGQG…EEEESEEDNT (78 aa)). Residues 127 to 136 (GQGGSGGTRR) show a composition bias toward gly residues. The segment covering 159–197 (SSDEESESVEEDEATAEEASADAEQGEAEEEEESEEDNT) has biased composition (acidic residues).

Belongs to the bacterial ribosomal protein bL17 family. Part of the 50S ribosomal subunit. Contacts protein L32.

The sequence is that of Large ribosomal subunit protein bL17 from Salinibacter ruber (strain DSM 13855 / M31).